The sequence spans 296 residues: MIYLHAIDPIAFSLGPVQVHWYGLMYLAAFFSAWALGRSRILRGRLPGVDMDGFSDLLFYGMLGVVLGGRIGYMLFYAFETFLANPLILFKVWEGGMSFHGGLLGVLIACWLWARKHRLHFFDVMDFVAPLVPLGLGFGRLGNFVGGELWGKFTQAGWGVIFPHAPELADRLPAQIQAQYAAGALNQFARHPSQLYEAALEGVVMFVVLWTFSMKPRARYAVSGLFALLYGVFRFIVEFVRVPDAPIGYLAFNWLTMGQILSLPLIAVGLVLLAMSRRAPVLQPVLPAPAGVEAAK.

A run of 4 helical transmembrane segments spans residues 10-30 (IAFS…LAAF), 57-77 (LLFY…MLFY), 92-112 (VWEG…ACWL), and 119-139 (LHFF…LGFG). Arg-140 contributes to the a 1,2-diacyl-sn-glycero-3-phospho-(1'-sn-glycerol) binding site. Helical transmembrane passes span 194-214 (QLYE…TFSM), 220-240 (YAVS…VEFV), and 254-274 (WLTM…VLLA).

This sequence belongs to the Lgt family.

It is found in the cell inner membrane. The enzyme catalyses L-cysteinyl-[prolipoprotein] + a 1,2-diacyl-sn-glycero-3-phospho-(1'-sn-glycerol) = an S-1,2-diacyl-sn-glyceryl-L-cysteinyl-[prolipoprotein] + sn-glycerol 1-phosphate + H(+). It functions in the pathway protein modification; lipoprotein biosynthesis (diacylglyceryl transfer). Its function is as follows. Catalyzes the transfer of the diacylglyceryl group from phosphatidylglycerol to the sulfhydryl group of the N-terminal cysteine of a prolipoprotein, the first step in the formation of mature lipoproteins. The protein is Phosphatidylglycerol--prolipoprotein diacylglyceryl transferase of Xanthomonas euvesicatoria pv. vesicatoria (strain 85-10) (Xanthomonas campestris pv. vesicatoria).